The primary structure comprises 319 residues: DNA-directed RNA polymerases II, IV and V subunit 3 (319 aa).

N-acetylmethionine is present on M1.

Belongs to the archaeal Rpo3/eukaryotic RPB3 RNA polymerase subunit family. As to quaternary structure, component of the RNA polymerase II complex consisting of at least 12 subunits. Interacts with SHH1, CLSY1, NRPB11 and NRPD1. Interacts with IYO.

The protein resides in the nucleus. DNA-dependent RNA polymerase catalyzes the transcription of DNA into RNA using the four ribonucleoside triphosphates as substrates. Component of RNA polymerase II which synthesizes mRNA precursors and many functional non-coding RNAs. Pol II is the central component of the basal RNA polymerase II transcription machinery. It is composed of mobile elements that move relative to each other. NRPB3 is part of the core element with the central large cleft and the clamp element that moves to open and close the cleft. Component of RNA polymerases IV and V which mediate short-interfering RNAs (siRNA) accumulation and subsequent RNA-directed DNA methylation-dependent (RdDM) transcriptional gene silencing (TGS) of endogenous repeated sequences, including transposable elements. The sequence is that of DNA-directed RNA polymerases II, IV and V subunit 3 (NRPB3) from Arabidopsis thaliana (Mouse-ear cress).